A 229-amino-acid chain; its full sequence is Large ribosomal subunit protein uL1 (229 aa).

The protein belongs to the universal ribosomal protein uL1 family. As to quaternary structure, part of the 50S ribosomal subunit.

Its function is as follows. Binds directly to 23S rRNA. The L1 stalk is quite mobile in the ribosome, and is involved in E site tRNA release. Functionally, protein L1 is also a translational repressor protein, it controls the translation of the L11 operon by binding to its mRNA. This chain is Large ribosomal subunit protein uL1, found in Histophilus somni (strain 2336) (Haemophilus somnus).